Here is a 346-residue protein sequence, read N- to C-terminus: 4-hydroxy-2-oxovalerate aldolase 2 (346 aa).

The 253-residue stretch at 8 to 260 folds into the Pyruvate carboxyltransferase domain; the sequence is VTVHDMTLRD…ETGVDVFKIQ (253 aa). Position 16–17 (16–17) interacts with substrate; sequence RD. D17 lines the Mn(2+) pocket. The active-site Proton acceptor is the H20. Residues S170 and H199 each contribute to the substrate site. Mn(2+)-binding residues include H199 and H201. Substrate is bound at residue Y290.

Belongs to the 4-hydroxy-2-oxovalerate aldolase family.

The enzyme catalyses (S)-4-hydroxy-2-oxopentanoate = acetaldehyde + pyruvate. This is 4-hydroxy-2-oxovalerate aldolase 2 (bphX3) from Metapseudomonas furukawaii (Pseudomonas furukawaii).